The sequence spans 459 residues: Putrescine aminotransferase (459 aa).

Pyridoxal 5'-phosphate is bound by residues 150–151 and Gln274; that span reads GT. Lys300 is subject to N6-(pyridoxal phosphate)lysine. Pyridoxal 5'-phosphate is bound at residue Thr332.

This sequence belongs to the class-III pyridoxal-phosphate-dependent aminotransferase family. Putrescine aminotransferase subfamily. Requires pyridoxal 5'-phosphate as cofactor.

It carries out the reaction an alkane-alpha,omega-diamine + 2-oxoglutarate = an omega-aminoaldehyde + L-glutamate. The enzyme catalyses putrescine + 2-oxoglutarate = 1-pyrroline + L-glutamate + H2O. The catalysed reaction is cadaverine + 2-oxoglutarate = 5-aminopentanal + L-glutamate. The protein operates within amine and polyamine degradation; putrescine degradation; 4-aminobutanal from putrescine (transaminase route): step 1/1. Functionally, catalyzes the aminotransferase reaction from putrescine to 2-oxoglutarate, leading to glutamate and 4-aminobutanal, which spontaneously cyclizes to form 1-pyrroline. This is the first step in one of two pathways for putrescine degradation, where putrescine is converted into 4-aminobutanoate (gamma-aminobutyrate or GABA) via 4-aminobutanal. Also functions as a cadaverine transaminase in a a L-lysine degradation pathway to succinate that proceeds via cadaverine, glutarate and L-2-hydroxyglutarate. This is Putrescine aminotransferase from Escherichia coli O17:K52:H18 (strain UMN026 / ExPEC).